The primary structure comprises 416 residues: MLSAADFDPKPRRASVAVDVGGVIVGGGAPVVVQSMTNTDTADIDSTVAQVAALHRAGSELVRITVDRDESAAAVPKIRERLLRLGMDVPLIGDFHYIGHKLLADHPDCAEALAKYRINPGNVGFKDKKDKQFAEIIEMAIRYDKPVRIGVNWGSLDQDLLTALMDRNAEAGSPLSARQVTREAIVQSALLSAALAEEIGLPRNRIILSAKVSQVQDLIAVNSILAERSNHALHLGLTEAGMGTKGIVASSAAMGFVLQHGIGDTIRVSLTPEPNGDRTREVQVAQEILQVMGFRQFIPVVAACPGCGRTTSTVFQELAQNIQNDIRKNMPVWREKYPGVEALNVAVMGCIVNGPGESKHADIGISLPGTGETPAAPVFIDGRKALTLRGPNIAADFEALVVDYIEKRFGQRTAAE.

4 residues coordinate [4Fe-4S] cluster: cysteine 304, cysteine 307, cysteine 350, and glutamate 357.

The protein belongs to the IspG family. The cofactor is [4Fe-4S] cluster.

It catalyses the reaction (2E)-4-hydroxy-3-methylbut-2-enyl diphosphate + oxidized [flavodoxin] + H2O + 2 H(+) = 2-C-methyl-D-erythritol 2,4-cyclic diphosphate + reduced [flavodoxin]. Its pathway is isoprenoid biosynthesis; isopentenyl diphosphate biosynthesis via DXP pathway; isopentenyl diphosphate from 1-deoxy-D-xylulose 5-phosphate: step 5/6. Converts 2C-methyl-D-erythritol 2,4-cyclodiphosphate (ME-2,4cPP) into 1-hydroxy-2-methyl-2-(E)-butenyl 4-diphosphate. The chain is 4-hydroxy-3-methylbut-2-en-1-yl diphosphate synthase (flavodoxin) from Rhizobium johnstonii (strain DSM 114642 / LMG 32736 / 3841) (Rhizobium leguminosarum bv. viciae).